The sequence spans 394 residues: Trans-enoyl reductase fumoC (394 aa).

62–65 serves as a coordination point for NADP(+); sequence VDGK. 152-159 contributes to the substrate binding site; it reads ASLASVGM. NADP(+) contacts are provided by residues 224 to 227, tyrosine 242, and 289 to 290; these read SSSS and LD. Residue 309–313 coordinates substrate; the sequence is TLTQF. 378-379 is an NADP(+) binding site; the sequence is VK.

It belongs to the zinc-containing alcohol dehydrogenase family. As to quaternary structure, monomer.

It participates in secondary metabolite biosynthesis. Its function is as follows. Trans-enoyl reductase; part of the gene cluster that mediates the biosynthesis of fumosorinone, a 2-pyridone alkaloid that acts as an inhibitor of protein tyrosine phosphatase 1B which is implicated asa negative regulator of insulin receptor signaling and a potential drug target for the treatment of type II diabetes and other associated metabolic syndromes. The polyketide-amino acid backbone of fumosorinone is first assembled by the PKS-NRPS hybrid fumoS. The PKS modules condense one acetyl-CoA starter unit with 7 malonyl-CoA units, programmed C-methylations occurring after the first 3 and the sixth extensions, and cycles of full reduction occurring after the first 2 extensions. Because fumoS lacks a designated enoyl reductase (ER) domain, the required activity is provided the enoyl reductase fumoC. Upon formation of the polyketide backbone on the thiotemplate, the polyketide is transferred to the NRPS module and linked to tyrosine to produce the acyltetramic acid intermediate called prefumosorinone A. The cytochrome P450 monooxygenase fumoA then probably catalyzes an unprecedented oxidative ring expansion of prefumosorinone A to form prefumosorinone B which contains the 2-pyridone core of fumosorinone. The cytochrome P450 monooxygenase fumoB might hydroxylate the nitrogen of prefumosorinone B, but not the acyltetramic acid prefumosorinone A, to form fumosorinone. This chain is Trans-enoyl reductase fumoC, found in Cordyceps fumosorosea (strain ARSEF 2679) (Isaria fumosorosea).